The following is a 191-amino-acid chain: Ribonuclease HII (191 aa).

One can recognise an RNase H type-2 domain in the interval isoleucine 16–leucine 191. 3 residues coordinate a divalent metal cation: aspartate 22, glutamate 23, and aspartate 110.

This sequence belongs to the RNase HII family. Mn(2+) serves as cofactor. Mg(2+) is required as a cofactor.

Its subcellular location is the cytoplasm. The enzyme catalyses Endonucleolytic cleavage to 5'-phosphomonoester.. Endonuclease that specifically degrades the RNA of RNA-DNA hybrids. The sequence is that of Ribonuclease HII from Campylobacter jejuni subsp. doylei (strain ATCC BAA-1458 / RM4099 / 269.97).